The sequence spans 467 residues: Probable apyrase 2 (467 aa).

Residues Met-1–Arg-25 lie on the Cytoplasmic side of the membrane. The chain crosses the membrane as a helical; Signal-anchor for type II membrane protein span at residues Gly-26–Pro-46. Residues Arg-47–Ser-467 lie on the Extracellular side of the membrane. Val-70–Arg-80 contributes to the ATP binding site. Glu-192 serves as the catalytic Proton acceptor. Gly-216–Gln-226 contacts ATP.

The protein belongs to the GDA1/CD39 NTPase family. The cofactor is Ca(2+).

The protein resides in the membrane. The enzyme catalyses a ribonucleoside 5'-triphosphate + 2 H2O = a ribonucleoside 5'-phosphate + 2 phosphate + 2 H(+). Catalyzes the hydrolysis of phosphoanhydride bonds of nucleoside tri- and di-phosphates. The polypeptide is Probable apyrase 2 (APY2) (Oryza sativa subsp. japonica (Rice)).